A 417-amino-acid polypeptide reads, in one-letter code: NADP-specific glutamate dehydrogenase A1 (417 aa).

Residue Lys105 is part of the active site.

It belongs to the Glu/Leu/Phe/Val dehydrogenases family. In terms of assembly, homohexamer.

It carries out the reaction L-glutamate + NADP(+) + H2O = 2-oxoglutarate + NH4(+) + NADPH + H(+). This is NADP-specific glutamate dehydrogenase A1 (gdhA1) from Halobacterium salinarum (Halobacterium halobium).